Consider the following 139-residue polypeptide: ATP synthase epsilon chain (139 aa).

Belongs to the ATPase epsilon chain family. F-type ATPases have 2 components, CF(1) - the catalytic core - and CF(0) - the membrane proton channel. CF(1) has five subunits: alpha(3), beta(3), gamma(1), delta(1), epsilon(1). CF(0) has three main subunits: a, b and c.

The protein localises to the cell inner membrane. In terms of biological role, produces ATP from ADP in the presence of a proton gradient across the membrane. This Marinomonas sp. (strain MWYL1) protein is ATP synthase epsilon chain.